The primary structure comprises 415 residues: MASRWWRWRRGCSWKPAARSPGPGSPGRAGPLGPSAAAEVRAQVHRRKGLDLSQIPYINLVKHLTSACPNVCRISRFHHTTPDSKTHSGEKYTDPFKLGWRDLKGLYEDIRKELLISTSELKEMSEYYFDGKGKAFRPIIVALMARACNIHHNNSRHVQASQRAIALIAEMIHTASLVHDDVIDDASSRRGKHTVNKIWGEKKAVLAGDLILSAASIALARIGNTTVISILTQVIEDLVRGEFLQLGSKENENERFAHYLEKTFKKTASLIANSCKAVSVLGCPDPVVHEIAYQYGKNVGIAFQLIDDVLDFTSCSDQMGKPTSADLKLGLATGPVLFACQQFPEMNAMIMRRFSLPGDVDRARQYVLQSDGVQQTTYLAQQYCHEAIREISKLRPSPERDALIQLSEIVLTRDK.

The interval 16 to 35 (PAARSPGPGSPGRAGPLGPS) is disordered. 3 residues coordinate isopentenyl diphosphate: K134, R137, and H173. Residues D180 and D184 each coordinate Mg(2+). Residue R190 participates in isopentenyl diphosphate binding.

It belongs to the FPP/GGPP synthase family. Heterotetramer composed of 2 PDSS1/DPS1 and 2 PDSS2/DLP1 subunits. Mg(2+) serves as cofactor.

The protein resides in the mitochondrion. It carries out the reaction 7 isopentenyl diphosphate + (2E,6E)-farnesyl diphosphate = all-trans-decaprenyl diphosphate + 7 diphosphate. The enzyme catalyses 6 isopentenyl diphosphate + (2E,6E)-farnesyl diphosphate = all-trans-nonaprenyl diphosphate + 6 diphosphate. It participates in cofactor biosynthesis; ubiquinone biosynthesis. Functionally, heterotetrameric enzyme that catalyzes the condensation of farnesyl diphosphate (FPP), which acts as a primer, and isopentenyl diphosphate (IPP) to produce prenyl diphosphates of varying chain lengths and participates in the determination of the side chain of ubiquinone. Supplies nona and decaprenyl diphosphate, the precursors for the side chain of the isoprenoid quinones ubiquinone-9 (Q9)and ubiquinone-10 (Q10) respectively. The enzyme adds isopentenyl diphosphate molecules sequentially to farnesyl diphosphate with trans stereochemistry. The chain is All trans-polyprenyl-diphosphate synthase PDSS1 from Homo sapiens (Human).